A 173-amino-acid polypeptide reads, in one-letter code: Putative metal-dependent hydrolase BCG9842_B2589 (173 aa).

Positions 65, 156, and 160 each coordinate Zn(2+).

It belongs to the metal hydrolase YfiT family. In terms of assembly, homodimer. Requires Zn(2+) as cofactor.

The protein localises to the cytoplasm. Functionally, possible metal-dependent hydrolase. The chain is Putative metal-dependent hydrolase BCG9842_B2589 from Bacillus cereus (strain G9842).